The primary structure comprises 120 residues: MLLDFLDQLFSRHSGNSREQAKQRLKLILAHDRADLTPAALEAMRLEILGVVSRYVELDSEGMQFHLAAEGGTTALIANLPIRRVKPLAEARLNSCEGENPQQDPGAAPSEGGHLSSPSP.

The interval 93-120 (LNSCEGENPQQDPGAAPSEGGHLSSPSP) is disordered.

This sequence belongs to the MinE family.

Prevents the cell division inhibition by proteins MinC and MinD at internal division sites while permitting inhibition at polar sites. This ensures cell division at the proper site by restricting the formation of a division septum at the midpoint of the long axis of the cell. The protein is Cell division topological specificity factor of Synechococcus sp. (strain JA-3-3Ab) (Cyanobacteria bacterium Yellowstone A-Prime).